Consider the following 453-residue polypeptide: Carbamoyl phosphate synthase arginine-specific small chain (453 aa).

The N-terminal 13 residues, 1 to 13 (MFSKLAANFAQRA), are a transit peptide targeting the mitochondrion. In terms of domain architecture, Glutamine amidotransferase type-1 spans 233 to 420 (HVALIDCGVK…LENVRAAKSA (188 aa)). C309 serves as the catalytic Nucleophile. Residues H393 and E395 contribute to the active site.

This sequence belongs to the CarA family. As to quaternary structure, heterodimer composed of 2 chains; the small (or glutamine) chain promotes the hydrolysis of glutamine to ammonia, which is used by the large (or ammonia) chain to synthesize carbamoyl phosphate.

The protein localises to the mitochondrion matrix. The catalysed reaction is hydrogencarbonate + L-glutamine + 2 ATP + H2O = carbamoyl phosphate + L-glutamate + 2 ADP + phosphate + 2 H(+). It carries out the reaction L-glutamine + H2O = L-glutamate + NH4(+). It participates in amino-acid biosynthesis; L-arginine biosynthesis; carbamoyl phosphate from bicarbonate: step 1/1. Its function is as follows. Small subunit of the arginine-specific carbamoyl phosphate synthase (CPSase). CPSase catalyzes the formation of carbamoyl phosphate from the ammonia moiety of glutamine, carbonate, and phosphate donated by ATP, the first step of the arginine biosynthetic pathway. The small subunit (glutamine amidotransferase) binds and cleaves glutamine to supply the large subunit with the substrate ammonia. The protein is Carbamoyl phosphate synthase arginine-specific small chain (cpa1) of Hypocrea virens (Gliocladium virens).